A 225-amino-acid polypeptide reads, in one-letter code: MTTQSQFLVNLSYGGLASQSNLRANNRVSPSSCQITRTNRSWALPVSFKVEKFQLQRGRRRRGSPCFGESEGLVKNGIGDADGIIIVDHGSRRRESNLMLEEFVKMFKEKTGYPIVEPAHMELAEPSIKDAFSLCVQQGAKRVVVSPFFLFPGRHWHTDIPSLTADAAKEFSGISYLITAPLGPHNLLLDVVNDRIQHCLSHVEGDADECLVCAGTNKCKLYNSS.

The N-terminal 46 residues, 1-46 (MTTQSQFLVNLSYGGLASQSNLRANNRVSPSSCQITRTNRSWALPV), are a transit peptide targeting the chloroplast. Fe cation-binding residues include histidine 89 and histidine 155. [4Fe-4S] cluster-binding residues include cysteine 199, cysteine 210, cysteine 213, and cysteine 219.

It belongs to the CbiX family. SirB subfamily. In terms of assembly, homodimer. [4Fe-4S] cluster is required as a cofactor.

The protein localises to the plastid. It is found in the chloroplast. The enzyme catalyses siroheme + 2 H(+) = sirohydrochlorin + Fe(2+). It participates in porphyrin-containing compound metabolism; siroheme biosynthesis; siroheme from sirohydrochlorin: step 1/1. Functionally, chelates iron to the siroheme precursor. Catalyzes the last step of the siroheme biosynthesis. Unlike its counterparts in bacteria, contains an [Fe-S] cluster which is not involved directly in the enzymatic reaction, but may play regulatory role in iron, sulfur and tetrapyrrole metabolism. The [Fe-S] cluster is required for normal plant growth. The protein is Sirohydrochlorin ferrochelatase, chloroplastic of Arabidopsis thaliana (Mouse-ear cress).